Consider the following 180-residue polypeptide: Trafficking protein particle complex subunit 3 (180 aa).

Cysteine 68 carries the S-palmitoyl cysteine lipid modification.

The protein belongs to the TRAPP small subunits family. BET3 subfamily. As to quaternary structure, homodimer. Component of the multisubunit transport protein particle (TRAPP) complex, which includes at least TRAPPC2, TRAPPC2L, TRAPPC3, TRAPPC3L, TRAPPC4, TRAPPC5, TRAPPC8, TRAPPC9, TRAPPC10, TRAPPC11 and TRAPPC12. Heterodimer with TRAPPC6A. The heterodimer TRAPPC3-TRAPPC6A interacts with TRAPPC2L. Heterodimer with TRAPPC6b. The heterodimer TRAPPC6B-TRAPPC3 interacts with TRAPPC1 likely providing a core for TRAPP complex formation. As to expression, widely expressed. Expressed in lung, heart, liver, spleen, brain and kidney.

Its subcellular location is the golgi apparatus. It localises to the cis-Golgi network. The protein resides in the endoplasmic reticulum. Its function is as follows. May play a role in vesicular transport from endoplasmic reticulum to Golgi. In Mus musculus (Mouse), this protein is Trafficking protein particle complex subunit 3.